Here is a 126-residue protein sequence, read N- to C-terminus: Holo-[acyl-carrier-protein] synthase (126 aa).

Residues Asp9 and Glu58 each coordinate Mg(2+).

Belongs to the P-Pant transferase superfamily. AcpS family. Mg(2+) serves as cofactor.

It is found in the cytoplasm. It catalyses the reaction apo-[ACP] + CoA = holo-[ACP] + adenosine 3',5'-bisphosphate + H(+). Transfers the 4'-phosphopantetheine moiety from coenzyme A to a Ser of acyl-carrier-protein. The protein is Holo-[acyl-carrier-protein] synthase of Serratia proteamaculans (strain 568).